Here is a 396-residue protein sequence, read N- to C-terminus: Putative transposase y4rJ (396 aa).

The protein belongs to the transposase 20 family.

This chain is Putative transposase y4rJ, found in Sinorhizobium fredii (strain NBRC 101917 / NGR234).